Consider the following 785-residue polypeptide: uncharacterized protein (785 aa).

The PE domain maps to 1-93 (MSWVMVSPEL…GGAYAAAEAA (93 aa)).

It belongs to the mycobacterial PE family. PGRS subfamily.

This is an uncharacterized protein from Mycobacterium tuberculosis (strain CDC 1551 / Oshkosh).